We begin with the raw amino-acid sequence, 483 residues long: FAD-linked oxidoreductase easE (483 aa).

The 184-residue stretch at 10-193 (QGRLPLYSAV…TEATVRVFSD (184 aa)) folds into the FAD-binding PCMH-type domain.

It belongs to the oxygen-dependent FAD-linked oxidoreductase family. FAD is required as a cofactor.

The protein operates within alkaloid biosynthesis; ergot alkaloid biosynthesis. Functionally, FAD-linked oxidoreductase; part of the gene cluster that mediates the biosynthesis of fungal ergot alkaloid. DmaW catalyzes the first step of ergot alkaloid biosynthesis by condensing dimethylallyl diphosphate (DMAP) and tryptophan to form 4-dimethylallyl-L-tryptophan. The second step is catalyzed by the methyltransferase easF that methylates 4-dimethylallyl-L-tryptophan in the presence of S-adenosyl-L-methionine, resulting in the formation of 4-dimethylallyl-L-abrine. The catalase easC and the FAD-dependent oxidoreductase easE then transform 4-dimethylallyl-L-abrine to chanoclavine-I which is further oxidized by easD in the presence of NAD(+), resulting in the formation of chanoclavine-I aldehyde. Agroclavine dehydrogenase easG then mediates the conversion of chanoclavine-I aldehyde to agroclavine via a non-enzymatic adduct reaction: the substrate is an iminium intermediate that is formed spontaneously from chanoclavine-I aldehyde in the presence of glutathione. The presence of easA is not required to complete this reaction. Further conversion of agroclavine to paspalic acid is a two-step process involving oxidation of agroclavine to elymoclavine and of elymoclavine to paspalic acid, the second step being performed by the elymoclavine oxidase cloA. Paspalic acid is then further converted to D-lysergic acid. Ergopeptines are assembled from D-lysergic acid and three different amino acids by the D-lysergyl-peptide-synthetases composed each of a monomudular and a trimodular nonribosomal peptide synthetase subunit. LpsB and lpsC encode the monomodular subunits responsible for D-lysergic acid activation and incorporation into the ergopeptine backbone. LpsA1 and A2 subunits encode the trimodular nonribosomal peptide synthetase assembling the tripeptide portion of ergopeptines. LpsA1 is responsible for formation of the major ergopeptine, ergotamine, and lpsA2 for alpha-ergocryptine, the minor ergopeptine of the total alkaloid mixture elaborated by C.purpurea. D-lysergyl-tripeptides are assembled by the nonribosomal peptide synthetases and released as N-(D-lysergyl-aminoacyl)-lactams. Cyclolization of the D-lysergyl-tripeptides is performed by the Fe(2+)/2-ketoglutarate-dependent dioxygenase easH which introduces a hydroxyl group into N-(D-lysergyl-aminoacyl)-lactam at alpha-C of the aminoacyl residue followed by spontaneous condensation with the terminal lactam carbonyl group. In Claviceps purpurea (Ergot fungus), this protein is FAD-linked oxidoreductase easE.